Reading from the N-terminus, the 605-residue chain is E3 ubiquitin-protein ligase synoviolin A (605 aa).

A helical membrane pass occupies residues 1–19 (MTGASLALTAAVVAHAYYL). Topologically, residues 20 to 35 (KNQFYPTVVYLTKSSP) are lumenal. Residues 36–56 (SMAVLYIQAFVLVFLLGKFMG) traverse the membrane as a helical segment. Residues 57–92 (KVFFGQLRAAEMEHLLERSWYAVTETCLAFTVFRDD) lie on the Cytoplasmic side of the membrane. The helical transmembrane segment at 93–113 (FSPRFVALFTLLLFLKCFHWL) threads the bilayer. Residues 114–129 (AEDRVDFMERSPNISW) are Lumenal-facing. Residues 130 to 150 (LFHFRILALMLLLGVLDAFFV) form a helical membrane-spanning segment. The Cytoplasmic portion of the chain corresponds to 151-163 (SHAYHSLVIRGAS). The chain crosses the membrane as a helical span at residues 164-184 (VQLVFGFEYAILMTVILTVFI). The Lumenal segment spans residues 185-218 (KYILHSVDLQSENPWDNKAVYMLYTELFTGFIKV). Residues 219–239 (LLYVAFMTIMVKVHTFPLFAI) traverse the membrane as a helical segment. An interaction with p53/TP53 region spans residues 230-264 (KVHTFPLFAIRPMYLAMRQFKKAVTDAIMSRRAIR). The Cytoplasmic portion of the chain corresponds to 240 to 605 (RPMYLAMRQF…KLETGTTDSQ (366 aa)). Residues Cys285, Cys288, Cys301, His303, His306, Cys309, Cys320, and Cys323 each coordinate Zn(2+). The RING-type; atypical zinc finger occupies 285-324 (CIICREEMVTGAKRLPCNHIFHTSCLRSWFQRQQTCPTCR). The span at 334–355 (TQPQTPTEQQNQHQNQAQQQPT) shows a compositional bias: low complexity. The segment at 334 to 433 (TQPQTPTEQQ…QPGAALPGFP (100 aa)) is disordered. The span at 356–391 (PVIPPQPNFPPGILPPFPPGMFPLWPPMGPFPPVPG) shows a compositional bias: pro residues. Positions 403–414 (PGSSSGSSPRPG) are enriched in low complexity. Over residues 415–424 (ETSNVGSESQ) the composition is skewed to polar residues. The stretch at 465-496 (EELRAMEGHERQNLEARLQCLQNIHTLLDAAM) forms a coiled coil. Positions 513–605 (QPPISSTSTS…KLETGTTDSQ (93 aa)) are disordered. Residues 516–539 (ISSTSTSTSSAASASTAPTTSNIS) show a composition bias toward low complexity. Polar residues predominate over residues 546 to 555 (DTTSTVTNTE). The span at 556-579 (SSQQSAPPAPVSVETLSGAEGGET) shows a compositional bias: low complexity.

It belongs to the HRD1 family. As to quaternary structure, homodimer.

The protein resides in the endoplasmic reticulum membrane. It carries out the reaction S-ubiquitinyl-[E2 ubiquitin-conjugating enzyme]-L-cysteine + [acceptor protein]-L-lysine = [E2 ubiquitin-conjugating enzyme]-L-cysteine + N(6)-ubiquitinyl-[acceptor protein]-L-lysine.. It functions in the pathway protein modification; protein ubiquitination. E3 ubiquitin-protein ligase which accepts ubiquitin specifically from endoplasmic reticulum-associated UBC7 E2 ligase and transfers it to substrates, promoting their degradation. Component of the endoplasmic reticulum quality control (ERQC) system also called ER-associated degradation (ERAD) involved in ubiquitin-dependent degradation of misfolded endoplasmic reticulum proteins. Also promotes the degradation of normal but naturally short-lived proteins. Protects cells from ER stress-induced apoptosis. Sequesters p53 in the cytoplasm and promotes its degradation, thereby negatively regulating its biological function in transcription, cell cycle regulation and apoptosis. The sequence is that of E3 ubiquitin-protein ligase synoviolin A (syvn1-a) from Xenopus laevis (African clawed frog).